Reading from the N-terminus, the 395-residue chain is S-adenosylmethionine synthase (395 aa).

ATP is bound at residue His16. Residue Asp18 participates in Mg(2+) binding. Position 44 (Glu44) interacts with K(+). Positions 57 and 100 each coordinate L-methionine. A flexible loop region spans residues 100–110; the sequence is QSPDIAGGVNL. ATP-binding positions include 175-177, 242-243, Asp251, 257-258, Ala274, and Lys278; these read DGK, RF, and RK. Asp251 contacts L-methionine. L-methionine is bound at residue Lys282.

It belongs to the AdoMet synthase family. In terms of assembly, homotetramer; dimer of dimers. The cofactor is Mg(2+). K(+) serves as cofactor.

Its subcellular location is the cytoplasm. The catalysed reaction is L-methionine + ATP + H2O = S-adenosyl-L-methionine + phosphate + diphosphate. It participates in amino-acid biosynthesis; S-adenosyl-L-methionine biosynthesis; S-adenosyl-L-methionine from L-methionine: step 1/1. Catalyzes the formation of S-adenosylmethionine (AdoMet) from methionine and ATP. The overall synthetic reaction is composed of two sequential steps, AdoMet formation and the subsequent tripolyphosphate hydrolysis which occurs prior to release of AdoMet from the enzyme. This is S-adenosylmethionine synthase from Thermus thermophilus (strain ATCC BAA-163 / DSM 7039 / HB27).